Consider the following 181-residue polypeptide: Large ribosomal subunit protein uL5 (181 aa).

This sequence belongs to the universal ribosomal protein uL5 family. As to quaternary structure, part of the 50S ribosomal subunit; part of the 5S rRNA/L5/L18/L25 subcomplex. Contacts the 5S rRNA and the P site tRNA. Forms a bridge to the 30S subunit in the 70S ribosome.

Its function is as follows. This is one of the proteins that bind and probably mediate the attachment of the 5S RNA into the large ribosomal subunit, where it forms part of the central protuberance. In the 70S ribosome it contacts protein S13 of the 30S subunit (bridge B1b), connecting the 2 subunits; this bridge is implicated in subunit movement. Contacts the P site tRNA; the 5S rRNA and some of its associated proteins might help stabilize positioning of ribosome-bound tRNAs. This chain is Large ribosomal subunit protein uL5, found in Helicobacter pylori (strain J99 / ATCC 700824) (Campylobacter pylori J99).